The primary structure comprises 291 residues: Filament protein FIN1 (291 aa).

At Ser-54 the chain carries Phosphoserine. Phosphothreonine is present on Thr-68. Ser-74 and Ser-88 each carry phosphoserine. Residues 254–284 (VELKEIKDLLLQMLRRQREIESRLSNIELQL) are a coiled coil.

In terms of assembly, homooligomer; in vitro, FIN1 self-assembles into 10 nm diameter filaments. Interacts with the 14-3-3 proteins BMH1 and BMH2, and the protein phosphatase 1 complex catalytic subunit GLC7. Phosphorylated by CDC28. Phosphorylation is required for BMH1 and BMH2 interaction. Dephosphorylation by GLC7 depends on the presence of BMH1 and BMH2.

Its subcellular location is the nucleus. The protein localises to the cytoplasm. The protein resides in the cytoskeleton. It is found in the spindle pole. Functionally, forms cell-cycle specific filaments between the spindle pole bodies of dividing yeast cells. This is Filament protein FIN1 (FIN1) from Saccharomyces cerevisiae (strain ATCC 204508 / S288c) (Baker's yeast).